A 327-amino-acid polypeptide reads, in one-letter code: Malate dehydrogenase (327 aa).

Position 12–18 (Gly-12–Ala-18) interacts with NAD(+). Residues Arg-93 and Arg-99 each contribute to the substrate site. NAD(+) is bound by residues Asn-106, Gln-113, and Val-130–Asn-132. Asn-132 and Arg-163 together coordinate substrate. His-188 acts as the Proton acceptor in catalysis.

It belongs to the LDH/MDH superfamily. MDH type 2 family.

The enzyme catalyses (S)-malate + NAD(+) = oxaloacetate + NADH + H(+). Catalyzes the reversible oxidation of malate to oxaloacetate. The polypeptide is Malate dehydrogenase (Paraburkholderia phytofirmans (strain DSM 17436 / LMG 22146 / PsJN) (Burkholderia phytofirmans)).